A 177-amino-acid chain; its full sequence is Large ribosomal subunit protein uL6 (177 aa).

It belongs to the universal ribosomal protein uL6 family. In terms of assembly, part of the 50S ribosomal subunit.

This protein binds to the 23S rRNA, and is important in its secondary structure. It is located near the subunit interface in the base of the L7/L12 stalk, and near the tRNA binding site of the peptidyltransferase center. The polypeptide is Large ribosomal subunit protein uL6 (Acinetobacter baumannii (strain AB307-0294)).